The chain runs to 78 residues: Large ribosomal subunit protein bL28 (78 aa).

This sequence belongs to the bacterial ribosomal protein bL28 family.

The protein is Large ribosomal subunit protein bL28 of Thiobacillus denitrificans (strain ATCC 25259 / T1).